We begin with the raw amino-acid sequence, 532 residues long: Cytokinin dehydrogenase 1 (532 aa).

The signal sequence occupies residues methionine 1–alanine 17. 2 N-linked (GlcNAc...) asparagine glycosylation sites follow: asparagine 52 and asparagine 63. The FAD-binding PCMH-type domain occupies threonine 65 to alanine 244. Residues phenylalanine 100, glycine 102, arginine 103, and glycine 104 each contribute to the FAD site. Histidine 105 is subject to Pros-8alpha-FAD histidine. FAD contacts are provided by serine 106 and glutamine 110. Asparagine 133 carries an N-linked (GlcNAc...) asparagine glycan. FAD is bound by residues aspartate 168, threonine 173, serine 179, valine 183, and isoleucine 234. N-linked (GlcNAc...) asparagine glycosylation is found at asparagine 321 and asparagine 432. FAD contacts are provided by tyrosine 490, serine 525, and glutamine 528.

This sequence belongs to the oxygen-dependent FAD-linked oxidoreductase family. As to quaternary structure, monomer. FAD serves as cofactor.

The protein localises to the secreted. Its subcellular location is the extracellular space. It catalyses the reaction N(6)-dimethylallyladenine + A + H2O = 3-methyl-2-butenal + adenine + AH2. Its function is as follows. Catalyzes the oxidation of cytokinins, a family of N(6)-substituted adenine derivatives that are plant hormones, where the substituent is an isopentenyl group. This chain is Cytokinin dehydrogenase 1 (CKX1), found in Oryza sativa subsp. japonica (Rice).